A 250-amino-acid chain; its full sequence is 3-deoxy-manno-octulosonate cytidylyltransferase (250 aa).

This sequence belongs to the KdsB family.

Its subcellular location is the cytoplasm. The catalysed reaction is 3-deoxy-alpha-D-manno-oct-2-ulosonate + CTP = CMP-3-deoxy-beta-D-manno-octulosonate + diphosphate. The protein operates within nucleotide-sugar biosynthesis; CMP-3-deoxy-D-manno-octulosonate biosynthesis; CMP-3-deoxy-D-manno-octulosonate from 3-deoxy-D-manno-octulosonate and CTP: step 1/1. It participates in bacterial outer membrane biogenesis; lipopolysaccharide biosynthesis. Functionally, activates KDO (a required 8-carbon sugar) for incorporation into bacterial lipopolysaccharide in Gram-negative bacteria. This Francisella tularensis subsp. tularensis (strain FSC 198) protein is 3-deoxy-manno-octulosonate cytidylyltransferase.